The primary structure comprises 5400 residues: Midasin (5400 aa).

AAA-ATPase protomer regions lie at residues 345-571, 656-986, 1050-1308, 1347-1652, 1769-2023, and 2074-2347; these read MVSL…HGLP, LLEK…AIKA, SYVK…EKVV, SMRR…VNMA, VLRV…VLRI, and IRQN…MMGP. ATP is bound by residues 360 to 367, 674 to 681, 1079 to 1086, 1369 to 1376, 1786 to 1793, and 2095 to 2102; these read GPSGSGKS, GETGTGKT, GPTSSGKT, GDTGGGKT, GSPGVGKT, and GPSSSGKT. Positions 2435 to 4569 are linker; sequence IYLSSLGVTD…DGVGAKDVSD (2135 aa). Coiled-coil stretches lie at residues 2896–2916, 3233–3253, and 3896–3916; these read LERLKLEKKRLEDKMGFSEID, AMKITCKLLKLEEKISSLELN, and MEQLDLNRKNVETELKEVLKL. 3 disordered regions span residues 4540 to 4890, 4905 to 4929, and 4990 to 5069; these read EEDD…SSSN, TLTDNLPKMEFPQNQSSTAQQTKVN, and QVNT…RMDS. Residues 4576 to 4612 are compositionally biased toward basic and acidic residues; that stretch reads QLHGTDKKEEEEKEQDDVLGKNKGIEMSDEFDGKEYS. A compositionally biased stretch (acidic residues) spans 4613 to 4631; the sequence is VSEDEEEDKEDEGSEDEPL. Composition is skewed to basic and acidic residues over residues 4641 to 4652 and 4661 to 4687; these read DAEKADEKPWNK and MNEKNESGPSIVDKDTRSRELRAKDDG. Composition is skewed to acidic residues over residues 4688-4698 and 4706-4721; these read VETADEPEESN and GNDENVEQDDFDDTDN. The span at 4722-4732 shows a compositional bias: basic and acidic residues; that stretch reads LEEKIQTKEEA. Positions 4740–4750 are enriched in acidic residues; sequence VDNEQIDDDME. Over residues 4751–4762 the composition is skewed to basic and acidic residues; that stretch reads MDKTEEVEKEDA. Over residues 4779–4798 the composition is skewed to acidic residues; sequence GENDQEETQEPSEENMEAEA. Positions 4799 to 4810 are enriched in basic and acidic residues; it reads EDRCGSPQKEEP. Acidic residues predominate over residues 4811 to 4822; the sequence is GNDLEQEPETEP. The segment covering 4823–4834 has biased composition (basic and acidic residues); it reads IEGKEVMSEDMM. Composition is skewed to polar residues over residues 4839–4855, 4864–4874, 4916–4928, and 5030–5040; these read RNDNISGVESGSQNPHG, TAPQENLSATD, PQNQSSTAQQTKV, and SKPSISNSIAE. The short motif at 5157–5164 is the Nuclear localization signal element; it reads MKKVIPYI. Residues 5186–5387 enclose the VWFA domain; sequence QVVIAVDDSR…EALPRTLGDV (202 aa). The stretch at 5271–5291 forms a coiled coil; it reads VVNLLRNMNEMLENLASTRRQ.

This sequence belongs to the midasin family. Associates with pre-60S ribosomes in the nucleoplasm. Constitutively and ubiquitously expressed. Mostly observed in the shoot apex and root tip, and, to a lower extent, in mature seeds, seedling (excluding the hypocotyl), roots, stems, leaves and flowers.

It is found in the nucleus. The protein resides in the nucleolus. It localises to the nucleoplasm. Functionally, nuclear chaperone required for maturation and nuclear export of pre-60S ribosome subunits. Functions at successive maturation steps to remove ribosomal factors at critical transition points, first driving the exit of early pre-60S particles from the nucleolus and then driving late pre-60S particles from the nucleus. Required for female gametophyte development. Involved in the expression regulation of genes related to plant growth and development. The protein is Midasin of Arabidopsis thaliana (Mouse-ear cress).